A 127-amino-acid polypeptide reads, in one-letter code: Aspartate 1-decarboxylase (127 aa).

Ser-25 acts as the Schiff-base intermediate with substrate; via pyruvic acid in catalysis. Pyruvic acid (Ser) is present on Ser-25. Thr-57 provides a ligand contact to substrate. The active-site Proton donor is the Tyr-58. Position 73–75 (73–75 (GAA)) interacts with substrate.

It belongs to the PanD family. As to quaternary structure, heterooctamer of four alpha and four beta subunits. It depends on pyruvate as a cofactor. Is synthesized initially as an inactive proenzyme, which is activated by self-cleavage at a specific serine bond to produce a beta-subunit with a hydroxyl group at its C-terminus and an alpha-subunit with a pyruvoyl group at its N-terminus.

It localises to the cytoplasm. The enzyme catalyses L-aspartate + H(+) = beta-alanine + CO2. It participates in cofactor biosynthesis; (R)-pantothenate biosynthesis; beta-alanine from L-aspartate: step 1/1. In terms of biological role, catalyzes the pyruvoyl-dependent decarboxylation of aspartate to produce beta-alanine. The protein is Aspartate 1-decarboxylase of Listeria welshimeri serovar 6b (strain ATCC 35897 / DSM 20650 / CCUG 15529 / CIP 8149 / NCTC 11857 / SLCC 5334 / V8).